Consider the following 559-residue polypeptide: Cation/calcium exchanger 2 (559 aa).

Transmembrane regions (helical) follow at residues 10–30 (FGYLTVTFLLVISCLLLGFFT), 86–106 (GFPILGQFLLFLWLLLLFYLL), 131–151 (VAGVTLLSLGNGAPDLFASLV), 167–187 (TVVGGSGFVTCVVVGIISISL), 203–223 (ICFFCAAIGSLALILVYGKIN), 224–244 (FWGALGFCSLYAVYVAFVVLS), 331–351 (WSKPLAVASVTFAPVLLSFLW), 362–382 (AGVVYLIGCLIGIALGFIAGA), 393–413 (WLLPWLAGGFVMSMTWSYISA), 416–436 (LVALLTSLGYIFGVSPSILGL), 480–500 (FALGISLVGCAWEAYPLSIVI), 506–526 (LLESLGFLVAGLVWSFLVLFS), and 531–551 (LGGVMGIGLLVIYLASLSLRI).

It belongs to the Ca(2+):cation antiporter (CaCA) (TC 2.A.19) family. Cation/calcium exchanger (CCX) subfamily.

The protein resides in the membrane. In terms of biological role, membrane-localized H(+)-dependent K(+) and Na(+) transporter. This is Cation/calcium exchanger 2 (CCX2) from Arabidopsis thaliana (Mouse-ear cress).